The primary structure comprises 1710 residues: Extracellular matrix protein A (1710 aa).

Residues M1 to A22 form the signal peptide. 66 Cys-rich CT repeats span residues N43 to E70, N71 to K94, N95 to K117, N118 to N141, N142 to N165, N166 to L189, N190 to N213, N214 to N237, N238 to K261, N262 to N285, N286 to N309, N310 to N333, N334 to N357, N358 to N381, N382 to K405, K406 to N429, N430 to N453, N454 to N477, N478 to N501, N502 to K525, K526 to N549, N550 to N573, N574 to N597, N598 to N621, N622 to S645, N646 to N669, N670 to N693, N694 to N717, N718 to K741, K742 to N765, N766 to N789, N790 to N813, N814 to N837, N838 to N861, N862 to S885, N886 to N909, N910 to N933, N934 to N957, N958 to N981, N982 to S1005, N1006 to N1029, N1030 to N1053, N1054 to N1077, N1078 to S1101, N1102 to N1125, N1126 to N1149, N1150 to N1173, N1174 to R1197, N1198 to S1221, N1222 to N1245, N1246 to K1269, N1270 to N1293, D1294 to N1317, N1318 to S1341, N1342 to N1365, N1366 to N1389, N1390 to N1413, N1414 to N1437, D1438 to N1461, N1462 to G1485, N1486 to P1509, D1511 to D1534, N1558 to G1581, N1582 to N1606, N1608 to D1632, and N1658 to S1682. Residues N150 and N151 are each glycosylated (N-linked (GlcNAc...) asparagine). 2 N-linked (GlcNAc...) asparagine glycosylation sites follow: N270 and N271. A glycan (N-linked (GlcNAc...) asparagine) is linked at N415. Residue N535 is glycosylated (N-linked (GlcNAc...) asparagine). The N-linked (GlcNAc...) asparagine glycan is linked to N655. N751 carries an N-linked (GlcNAc...) asparagine glycan. 3 N-linked (GlcNAc...) asparagine glycosylation sites follow: N871, N894, and N895. N1015 carries N-linked (GlcNAc...) asparagine glycosylation. 2 N-linked (GlcNAc...) asparagine glycosylation sites follow: N1110 and N1111. Residue N1183 is glycosylated (N-linked (GlcNAc...) asparagine). An N-linked (GlcNAc...) asparagine glycan is attached at N1255. An N-linked (GlcNAc...) asparagine glycan is attached at N1351. N-linked (GlcNAc...) asparagine glycosylation is present at N1530. N1624 carries an N-linked (GlcNAc...) asparagine glycan.

Its subcellular location is the secreted. This is Extracellular matrix protein A (ecmA) from Dictyostelium discoideum (Social amoeba).